The primary structure comprises 92 residues: Small ribosomal subunit protein uS19 (92 aa).

The protein belongs to the universal ribosomal protein uS19 family.

In terms of biological role, protein S19 forms a complex with S13 that binds strongly to the 16S ribosomal RNA. The chain is Small ribosomal subunit protein uS19 from Limosilactobacillus reuteri (strain DSM 20016) (Lactobacillus reuteri).